The primary structure comprises 483 residues: MSEISVLAIVSEIFPLIKTGGLADVAGALPAALAGEGIEVATLVPGYPAVMAQIEYAETVIDARPLYGAPARVLRGSAAGLDLFVLDAPHLYDRPGNPYLLPDGRDFPDNPFRFAALCQTGSALGFGAAPGFLPDIVHAHDWQAGLAAAYLHYDGRERPGTVATIHNLAFQGKYPAELLGALGLPPQAFSLEGVEYYGTIGFLKAALALSDRITTVSPTYAAEIRTPEHGMGLDGLLRTRAERLIGILNGIDDEVWDPSSDPLITEPFDVETLARRPANKAALQDKFGLDPDPGALLLGVVSRLSWQKGLDLLLANLDLLERLGVQLAVLGSGEPELVRQLLEAAEARPGRVGAVIGYDEAIAHRIQAGADAIVIPSRFEPCGLTQLCALRYGALPIVARVGGLADTIIDANEMALASGIGTGLQFSPPTADMLGATLERAARLWAEPEIWDELIENGMLTDVSWRRPAALYAKLFRDLVRER.

Lys-18 contacts ADP-alpha-D-glucose.

This sequence belongs to the glycosyltransferase 1 family. Bacterial/plant glycogen synthase subfamily.

It carries out the reaction [(1-&gt;4)-alpha-D-glucosyl](n) + ADP-alpha-D-glucose = [(1-&gt;4)-alpha-D-glucosyl](n+1) + ADP + H(+). It functions in the pathway glycan biosynthesis; glycogen biosynthesis. Functionally, synthesizes alpha-1,4-glucan chains using ADP-glucose. This chain is Glycogen synthase, found in Methylocella silvestris (strain DSM 15510 / CIP 108128 / LMG 27833 / NCIMB 13906 / BL2).